We begin with the raw amino-acid sequence, 533 residues long: tRNA(Ile)-lysidine synthase (533 aa).

Serine 27–serine 32 contributes to the ATP binding site.

Belongs to the tRNA(Ile)-lysidine synthase family.

The protein resides in the cytoplasm. It catalyses the reaction cytidine(34) in tRNA(Ile2) + L-lysine + ATP = lysidine(34) in tRNA(Ile2) + AMP + diphosphate + H(+). Ligates lysine onto the cytidine present at position 34 of the AUA codon-specific tRNA(Ile) that contains the anticodon CAU, in an ATP-dependent manner. Cytidine is converted to lysidine, thus changing the amino acid specificity of the tRNA from methionine to isoleucine. This chain is tRNA(Ile)-lysidine synthase, found in Rickettsia peacockii (strain Rustic).